A 141-amino-acid polypeptide reads, in one-letter code: Hemoglobin subunit alpha (141 aa).

Residues 1–141 (VLSPADKTNV…VSTVLTSKYR (141 aa)) enclose the Globin domain. S3 is modified (phosphoserine). At K7 the chain carries N6-succinyllysine. T8 is subject to Phosphothreonine. K11 carries the post-translational modification N6-succinyllysine. K16 is modified (N6-acetyllysine; alternate). The residue at position 16 (K16) is an N6-succinyllysine; alternate. At Y24 the chain carries Phosphotyrosine. At S35 the chain carries Phosphoserine. K40 carries the post-translational modification N6-succinyllysine. H58 is a binding site for O2. Residue H87 participates in heme b binding. S102 carries the phosphoserine modification. T108 is subject to Phosphothreonine. Residues S124 and S131 each carry the phosphoserine modification. 2 positions are modified to phosphothreonine: T134 and T137. S138 is subject to Phosphoserine.

This sequence belongs to the globin family. As to quaternary structure, heterotetramer of two alpha chains and two beta chains. Red blood cells.

Involved in oxygen transport from the lung to the various peripheral tissues. In terms of biological role, hemopressin acts as an antagonist peptide of the cannabinoid receptor CNR1. Hemopressin-binding efficiently blocks cannabinoid receptor CNR1 and subsequent signaling. The sequence is that of Hemoglobin subunit alpha (HBA) from Cynopterus sphinx (Indian short-nosed fruit bat).